The following is a 101-amino-acid chain: MYAIVKTGGKQYKVAEGDLVKVEKIEGEPGASVALTPVLLVDGADVTTAADKLASVSVNTEIVEHTKGPKIKILKYKNKTGYKKRQGHRQPLTVLKVTGIK.

The protein belongs to the bacterial ribosomal protein bL21 family. In terms of assembly, part of the 50S ribosomal subunit. Contacts protein L20.

This protein binds to 23S rRNA in the presence of protein L20. This is Large ribosomal subunit protein bL21 from Corynebacterium glutamicum (strain R).